The primary structure comprises 152 residues: uncharacterized protein (152 aa).

A run of 3 helical transmembrane segments spans residues 15–35 (IINVFVSFGFNLILGILIYDI), 43–63 (LVVACILIAMPIIAFLILILT), and 117–137 (TFLLLLIAFLAFGLIFTKLLI).

It to M.jannaschii MJ0129 and MJ0587.

It localises to the cell membrane. This is an uncharacterized protein from Methanocaldococcus jannaschii (strain ATCC 43067 / DSM 2661 / JAL-1 / JCM 10045 / NBRC 100440) (Methanococcus jannaschii).